A 482-amino-acid polypeptide reads, in one-letter code: Probable cytochrome P450 508D1 (482 aa).

Residues 1–21 traverse the membrane as a helical segment; the sequence is MVYLKNILIFLIIFLINPLVK. Cysteine 428 contacts heme.

It belongs to the cytochrome P450 family. Heme is required as a cofactor.

It is found in the membrane. This is Probable cytochrome P450 508D1 (cyp508D1) from Dictyostelium discoideum (Social amoeba).